Here is a 263-residue protein sequence, read N- to C-terminus: uncharacterized protein (263 aa).

7 helical membrane-spanning segments follow: residues 1-21 (MLVIVLQGLAGFLSIIAILCQ), 38-58 (LFLLDFVGNGLYLYCALHYCY), 82-102 (IPISSFLILKDFCVSCCCMMV), 118-138 (GISITSIIIISVFLVLGIFTY), 151-171 (GKFGVFYLEHINYLWVMANLL), 196-216 (FALISFLAESIDLLGRLVIPT), and 230-250 (FWVKLIQFVTLLVILCQVQYV).

The protein localises to the membrane. This is an uncharacterized protein from Saccharomyces cerevisiae (strain ATCC 204508 / S288c) (Baker's yeast).